A 156-amino-acid polypeptide reads, in one-letter code: Small ribosomal subunit protein uS7 (156 aa).

This sequence belongs to the universal ribosomal protein uS7 family. In terms of assembly, part of the 30S ribosomal subunit. Contacts proteins S9 and S11.

Its function is as follows. One of the primary rRNA binding proteins, it binds directly to 16S rRNA where it nucleates assembly of the head domain of the 30S subunit. Is located at the subunit interface close to the decoding center, probably blocks exit of the E-site tRNA. The sequence is that of Small ribosomal subunit protein uS7 from Aliivibrio salmonicida (strain LFI1238) (Vibrio salmonicida (strain LFI1238)).